Reading from the N-terminus, the 342-residue chain is Cyclin-dependent kinase-like 4 (342 aa).

The Protein kinase domain occupies 4 to 286 (YEKLAKIGEG…CAQLLDSAYF (283 aa)). ATP is bound by residues 10–18 (IGEGSYGVV) and Lys33. A [NKR]KIAxRE motif is present at residues 45–51 (RKIALRE). Residue Asp126 is the Proton acceptor of the active site. A disordered region spans residues 295-328 (KRKARSEGRSRRRQQNQLLPLIPGSHISPTPDGR).

The protein belongs to the protein kinase superfamily. CMGC Ser/Thr protein kinase family. CDC2/CDKX subfamily.

The protein localises to the cytoplasm. The catalysed reaction is L-seryl-[protein] + ATP = O-phospho-L-seryl-[protein] + ADP + H(+). It carries out the reaction L-threonyl-[protein] + ATP = O-phospho-L-threonyl-[protein] + ADP + H(+). The protein is Cyclin-dependent kinase-like 4 (Cdkl4) of Mus musculus (Mouse).